The sequence spans 422 residues: Serine--tRNA ligase (422 aa).

229-231 provides a ligand contact to L-serine; it reads TAE. Residue 260–262 participates in ATP binding; sequence RKE. Residue Glu-283 participates in L-serine binding. Position 347-350 (347-350) interacts with ATP; it reads EISS. Residue Ser-383 coordinates L-serine.

Belongs to the class-II aminoacyl-tRNA synthetase family. Type-1 seryl-tRNA synthetase subfamily. In terms of assembly, homodimer. The tRNA molecule binds across the dimer.

The protein localises to the cytoplasm. The catalysed reaction is tRNA(Ser) + L-serine + ATP = L-seryl-tRNA(Ser) + AMP + diphosphate + H(+). The enzyme catalyses tRNA(Sec) + L-serine + ATP = L-seryl-tRNA(Sec) + AMP + diphosphate + H(+). It functions in the pathway aminoacyl-tRNA biosynthesis; selenocysteinyl-tRNA(Sec) biosynthesis; L-seryl-tRNA(Sec) from L-serine and tRNA(Sec): step 1/1. In terms of biological role, catalyzes the attachment of serine to tRNA(Ser). Is also able to aminoacylate tRNA(Sec) with serine, to form the misacylated tRNA L-seryl-tRNA(Sec), which will be further converted into selenocysteinyl-tRNA(Sec). This chain is Serine--tRNA ligase, found in Geotalea uraniireducens (strain Rf4) (Geobacter uraniireducens).